The chain runs to 434 residues: Serine hydroxymethyltransferase (434 aa).

(6S)-5,6,7,8-tetrahydrofolate contacts are provided by residues leucine 133 and 137–139 (GHL). Lysine 242 bears the N6-(pyridoxal phosphate)lysine mark.

It belongs to the SHMT family. As to quaternary structure, homodimer. The cofactor is pyridoxal 5'-phosphate.

The protein localises to the cytoplasm. The enzyme catalyses (6R)-5,10-methylene-5,6,7,8-tetrahydrofolate + glycine + H2O = (6S)-5,6,7,8-tetrahydrofolate + L-serine. The protein operates within one-carbon metabolism; tetrahydrofolate interconversion. It participates in amino-acid biosynthesis; glycine biosynthesis; glycine from L-serine: step 1/1. Its function is as follows. Catalyzes the reversible interconversion of serine and glycine with tetrahydrofolate (THF) serving as the one-carbon carrier. This reaction serves as the major source of one-carbon groups required for the biosynthesis of purines, thymidylate, methionine, and other important biomolecules. Also exhibits THF-independent aldolase activity toward beta-hydroxyamino acids, producing glycine and aldehydes, via a retro-aldol mechanism. This is Serine hydroxymethyltransferase from Methylobacterium radiotolerans (strain ATCC 27329 / DSM 1819 / JCM 2831 / NBRC 15690 / NCIMB 10815 / 0-1).